A 228-amino-acid polypeptide reads, in one-letter code: Cytochrome b5 domain-containing protein 1 (228 aa).

One can recognise a Cytochrome b5 heme-binding domain in the interval 17–83 (RRYFTPSEVA…DPQTRDIRKH (67 aa)). A heme-binding site is contributed by histidine 83.

This sequence belongs to the cytochrome b5 family.

The protein localises to the cytoplasm. It is found in the cytoskeleton. Its subcellular location is the cilium axoneme. Functionally, radial spoke stalk protein that binds heme under oxidizing conditions. Required for the coordinated beating of multiple cilia maybe by functioning in a redox signaling pathway. The sequence is that of Cytochrome b5 domain-containing protein 1 (Cyb5d1) from Mus musculus (Mouse).